We begin with the raw amino-acid sequence, 274 residues long: Uridine-5'-phosphate dioxygenase (274 aa).

Fe cation is bound by residues H103, D105, and H246.

Requires Fe(2+) as cofactor.

The enzyme catalyses UMP + 2-oxoglutarate + O2 = uridine-5'-aldehyde + succinate + phosphate + CO2. Its pathway is antibiotic biosynthesis. Its activity is regulated as follows. Inhibited by several divalent cations, including Zn(2+). In terms of biological role, dioxygenase involved in the biosynthesis of the lipopeptidyl nucleoside antibiotic A-90289. Catalyzes the dephosphorylation and oxidation of UMP to generate uridine-5'-aldehyde, the first intermediate in the biosynthesis of A-90289. The chain is Uridine-5'-phosphate dioxygenase from Streptomyces sp.